Reading from the N-terminus, the 1197-residue chain is MTSSSSWVKTDGETPQDQVFINFRGVELRKNFVSHLEKGLKRKGINAFIDTDEEMGQELSVLLERIEGSRIALAIFSPRYTESKWCLKELAKMKERTEQKELVVIPIFYKVQPVTVKELKGDFGDKFRELVKSTDKKTKKEWKEALQYVPFLTGIVLDEKSDEDEVINIIIRKVKEILNRRSEGPPSKCSALPPQRHQKRHETFWGIELRIKQLEEKLRFGSDETTRTIGVVGMPGIGKTTLATMLYEKWNDRFLRHVLIRDIHEASEEDGLNYLATKFLQGLLKVENANIESVQAAHEAYKDQLLETKVLVILDNVSNKDQVDALLGERNWIKKGSKILITTSDKSLMIQSLVNDTYEVPPLSDKDAIKHFIRYAFDGNEGAAPGPGQGNFPKLSKDFVHYTKGNPLALQMLGKELLGKDESHWGLKLNALDQHHNSPPGQSICKMLQRVWEGSYKALSQKEKDALLDIACFRSQDENYVASLLDSDGPSNILEDLVNKFMINIYAGKVDMHDTLYMLSKELGREATATDRKGRHRLWHHHTIIAVLDKNKGGSNIRSIFLDLSDITRKWCFYRHAFAMMRDLRYLKIYSTHCPQECESDIKLNFPEGLLLPLNEVRYLHWLKFPLKEVPQDFNPGNLVDLKLPYSEIERVWEDNKDAPKLKWVNLNHSKKLNTLAGLGKAQNLQELNLEGCTALKEMHVDMENMKFLVFLNLRGCTSLKSLPEIQLISLKTLILSGCSKFKTFQVISDKLEALYLDGTAIKELPCDIGRLQRLVMLNMKGCKKLKRLPDSLGQLKALEELILSGCSKLNEFPETWGNMSRLEILLLDETAIKDMPKILSVRRLCLNKNEKISRLPDLLNKFSQLQWLHLKYCKNLTHVPQLPPNLQYLNVHGCSSLKTVAKPLVCSIPMKHVNSSFIFTNCNELEQAAKEEIVVYAERKCHLLASALKRCDESCVPEILFCTSFPGCEMPSWFSHDAIGSMVEFELPPHWNHNRLSGIALCVVVSFKNCKSHANLIVKFSCEQNNGEGSSSSITWKVGSLIEQDNQEETVESDHVFIGYTNCLDFIKLVKGQGGPKCAPTKASLEFSVRTGTGGEATLEVLKSGFSFVFEPEENRVPSPRNDDVKGKVKINKTPSANGCFKDQAKGNESPKGQWQTYIENSSTNIPSEAHSSQKTGFNGFNGMYSVCVLYEMYSH.

Residues Pro-15 to Leu-178 enclose the TIR domain. Glu-89 is a catalytic residue. Positions Arg-210–Tyr-480 constitute an NB-ARC domain. LRR repeat units follow at residues Leu-614 to Pro-636, Asn-638 to Ala-659, Thr-694 to Gly-716, Leu-728 to Ser-749, Asp-750 to Arg-774, Val-776 to Leu-796, Lys-797 to Asn-819, Met-820 to Arg-843, Leu-845 to Lys-862, and Phe-863 to Tyr-889.

It carries out the reaction NAD(+) + H2O = ADP-D-ribose + nicotinamide + H(+). Its function is as follows. TIR-NB-LRR receptor-like protein that functions in photomorphogenic development. May function downstream of phytochrome B (phyB) signaling. In Arabidopsis thaliana (Mouse-ear cress), this protein is Disease resistance-like protein CSA1.